Consider the following 175-residue polypeptide: Crossover junction endodeoxyribonuclease RuvC (175 aa).

Catalysis depends on residues Asp-8, Glu-67, and Asp-139. Mg(2+) is bound by residues Asp-8, Glu-67, and Asp-139.

Belongs to the RuvC family. Homodimer which binds Holliday junction (HJ) DNA. The HJ becomes 2-fold symmetrical on binding to RuvC with unstacked arms; it has a different conformation from HJ DNA in complex with RuvA. In the full resolvosome a probable DNA-RuvA(4)-RuvB(12)-RuvC(2) complex forms which resolves the HJ. It depends on Mg(2+) as a cofactor.

The protein localises to the cytoplasm. The catalysed reaction is Endonucleolytic cleavage at a junction such as a reciprocal single-stranded crossover between two homologous DNA duplexes (Holliday junction).. Functionally, the RuvA-RuvB-RuvC complex processes Holliday junction (HJ) DNA during genetic recombination and DNA repair. Endonuclease that resolves HJ intermediates. Cleaves cruciform DNA by making single-stranded nicks across the HJ at symmetrical positions within the homologous arms, yielding a 5'-phosphate and a 3'-hydroxyl group; requires a central core of homology in the junction. The consensus cleavage sequence is 5'-(A/T)TT(C/G)-3'. Cleavage occurs on the 3'-side of the TT dinucleotide at the point of strand exchange. HJ branch migration catalyzed by RuvA-RuvB allows RuvC to scan DNA until it finds its consensus sequence, where it cleaves and resolves the cruciform DNA. This is Crossover junction endodeoxyribonuclease RuvC from Marinobacter nauticus (strain ATCC 700491 / DSM 11845 / VT8) (Marinobacter aquaeolei).